The sequence spans 206 residues: Protein GrpE (206 aa).

Positions 1 to 15 (MTDSNGQKDNNQDQA) are enriched in polar residues. The disordered stretch occupies residues 1-38 (MTDSNGQKDNNQDQAQPADPVVSKPYIMPDDPEEGTNE).

Belongs to the GrpE family. Homodimer.

The protein resides in the cytoplasm. Functionally, participates actively in the response to hyperosmotic and heat shock by preventing the aggregation of stress-denatured proteins, in association with DnaK and GrpE. It is the nucleotide exchange factor for DnaK and may function as a thermosensor. Unfolded proteins bind initially to DnaJ; upon interaction with the DnaJ-bound protein, DnaK hydrolyzes its bound ATP, resulting in the formation of a stable complex. GrpE releases ADP from DnaK; ATP binding to DnaK triggers the release of the substrate protein, thus completing the reaction cycle. Several rounds of ATP-dependent interactions between DnaJ, DnaK and GrpE are required for fully efficient folding. The chain is Protein GrpE from Rhodopseudomonas palustris (strain BisB5).